Reading from the N-terminus, the 466-residue chain is Ribulose bisphosphate carboxylase large chain (466 aa).

Lys4 carries the post-translational modification N6,N6,N6-trimethyllysine. Residues Asn113 and Thr163 each coordinate substrate. The Proton acceptor role is filled by Lys165. Lys167 lines the substrate pocket. Mg(2+) is bound by residues Lys191, Asp193, and Glu194. The residue at position 191 (Lys191) is an N6-carboxylysine. The Proton acceptor role is filled by His284. The substrate site is built by Arg285, His317, and Ser369.

It belongs to the RuBisCO large chain family. Type I subfamily. Heterohexadecamer of 8 large chains and 8 small chains; disulfide-linked. The disulfide link is formed within the large subunit homodimers. Mg(2+) is required as a cofactor. In terms of processing, the disulfide bond which can form in the large chain dimeric partners within the hexadecamer appears to be associated with oxidative stress and protein turnover.

It localises to the plastid. It is found in the chloroplast. It catalyses the reaction 2 (2R)-3-phosphoglycerate + 2 H(+) = D-ribulose 1,5-bisphosphate + CO2 + H2O. The enzyme catalyses D-ribulose 1,5-bisphosphate + O2 = 2-phosphoglycolate + (2R)-3-phosphoglycerate + 2 H(+). Its function is as follows. RuBisCO catalyzes two reactions: the carboxylation of D-ribulose 1,5-bisphosphate, the primary event in carbon dioxide fixation, as well as the oxidative fragmentation of the pentose substrate in the photorespiration process. Both reactions occur simultaneously and in competition at the same active site. This Proboscidea louisianica (Louisiana Devil's-claw) protein is Ribulose bisphosphate carboxylase large chain.